The following is a 326-amino-acid chain: DNA-directed RNA polymerase subunit alpha (326 aa).

The tract at residues 1–231 (MQTALLKPKI…DQLSVFAALE (231 aa)) is alpha N-terminal domain (alpha-NTD). The segment at 247–326 (IDPILLRPVD…ENWPPAGLEK (80 aa)) is alpha C-terminal domain (alpha-CTD).

The protein belongs to the RNA polymerase alpha chain family. As to quaternary structure, homodimer. The RNAP catalytic core consists of 2 alpha, 1 beta, 1 beta' and 1 omega subunit. When a sigma factor is associated with the core the holoenzyme is formed, which can initiate transcription.

It catalyses the reaction RNA(n) + a ribonucleoside 5'-triphosphate = RNA(n+1) + diphosphate. Its function is as follows. DNA-dependent RNA polymerase catalyzes the transcription of DNA into RNA using the four ribonucleoside triphosphates as substrates. The chain is DNA-directed RNA polymerase subunit alpha from Ralstonia nicotianae (strain ATCC BAA-1114 / GMI1000) (Ralstonia solanacearum).